The sequence spans 74 residues: Omega-conotoxin-like PuIIA (74 aa).

The signal sequence occupies residues 1–22 (MKLTCVVIVAVLFLTACQLITA). Residues 23 to 46 (ETYSRGEQKHRALSSTDKNSKLTR) constitute a propeptide that is removed on maturation. 3 disulfides stabilise this stretch: C48-C62, C55-C66, and C61-C73.

The protein belongs to the conotoxin O1 superfamily. In terms of tissue distribution, expressed by the venom duct.

The protein resides in the secreted. Its function is as follows. Omega-conotoxins act at presynaptic membranes, they bind and block voltage-gated calcium channels (Cav). The sequence is that of Omega-conotoxin-like PuIIA from Conus pulicarius (Flea-bitten cone).